Here is a 123-residue protein sequence, read N- to C-terminus: Large ribosomal subunit protein uL14 (123 aa).

Belongs to the universal ribosomal protein uL14 family. Part of the 50S ribosomal subunit. Forms a cluster with proteins L3 and L19. In the 70S ribosome, L14 and L19 interact and together make contacts with the 16S rRNA in bridges B5 and B8.

Binds to 23S rRNA. Forms part of two intersubunit bridges in the 70S ribosome. In Vibrio vulnificus (strain CMCP6), this protein is Large ribosomal subunit protein uL14.